The sequence spans 408 residues: Arginine biosynthesis bifunctional protein ArgJ (408 aa).

Substrate contacts are provided by Thr156, Lys182, Thr193, Glu279, Asn403, and Ser408. Residue Thr193 is the Nucleophile of the active site.

Belongs to the ArgJ family. As to quaternary structure, heterotetramer of two alpha and two beta chains.

The protein localises to the cytoplasm. It catalyses the reaction N(2)-acetyl-L-ornithine + L-glutamate = N-acetyl-L-glutamate + L-ornithine. The enzyme catalyses L-glutamate + acetyl-CoA = N-acetyl-L-glutamate + CoA + H(+). The protein operates within amino-acid biosynthesis; L-arginine biosynthesis; L-ornithine and N-acetyl-L-glutamate from L-glutamate and N(2)-acetyl-L-ornithine (cyclic): step 1/1. It participates in amino-acid biosynthesis; L-arginine biosynthesis; N(2)-acetyl-L-ornithine from L-glutamate: step 1/4. Functionally, catalyzes two activities which are involved in the cyclic version of arginine biosynthesis: the synthesis of N-acetylglutamate from glutamate and acetyl-CoA as the acetyl donor, and of ornithine by transacetylation between N(2)-acetylornithine and glutamate. This chain is Arginine biosynthesis bifunctional protein ArgJ, found in Bordetella pertussis (strain Tohama I / ATCC BAA-589 / NCTC 13251).